A 325-amino-acid polypeptide reads, in one-letter code: UDP-N-acetylglucosamine transporter ROCK1 (325 aa).

Residues 1-13 (MATANGAKSPSSM) lie on the Cytoplasmic side of the membrane. A helical membrane pass occupies residues 14-34 (GPKVLFYSILLTLQYGAQPLI). Over 35–42 (SKRCIRKD) the chain is Lumenal. Residues 43–63 (VIVTSSVLTCEIVKVICALIL) traverse the membrane as a helical segment. At 64–109 (MARNGSLKGLAKEWTLMGSLTASGLPAAIYALQNSLLQISYRSLDS) the chain is on the cytoplasmic side. Residues 110–130 (LTFSILNQTKIFFTAFFTFII) traverse the membrane as a helical segment. Over 131-135 (LRQKQ) the chain is Lumenal. A helical membrane pass occupies residues 136–156 (SILQIGALCLLIMAAVLLSVG). Topologically, residues 157–171 (EGSNKDSSGINADQK) are cytoplasmic. A helical transmembrane segment spans residues 172 to 192 (LFYGIIPVLAASVLSGLASSL). At 193-203 (CQWASQVKKHS) the chain is on the lumenal side. A helical membrane pass occupies residues 204–224 (SYLMTVEMSIVGSLCLLVSTL). Residues 225-241 (KSPDGEAIKKYGFFHGW) lie on the Cytoplasmic side of the membrane. A helical transmembrane segment spans residues 242–262 (TALTLVPVISNALGGILVGLV). The Lumenal portion of the chain corresponds to 263–270 (TSHAGGVR). Residues 271-291 (KGFVIVSALLVTALLQFAFEG) traverse the membrane as a helical segment. Over 292–325 (KPPSSYCLVALPLVMSSISMYQKYPYIDKKKKKV) the chain is Cytoplasmic.

Belongs to the nucleotide-sugar transporter family. CMP-Sialate:CMP antiporter (TC 2.A.7.12) subfamily. Expressed in roots, cotyledons, leaves, stems, flowers and siliques.

Its subcellular location is the endoplasmic reticulum membrane. Functionally, mediates the transport of UDP-linked acetylated hexosamines across the endoplasmic reticulum (ER) membrane. Facilitates UDP-N-acetylglucosamine (UDP-GlcNAc) and UDP-N-acetylgalactosamine (UDP-GalNAc) transport. Regulates the cytokinin signal in meristematic cells through modulating activity of cytokinin oxidases/dehydrogenases. Part of the ER quality control system, which determines the fate of aberrant proteins in the secretory pathway. This is UDP-N-acetylglucosamine transporter ROCK1 from Arabidopsis thaliana (Mouse-ear cress).